Reading from the N-terminus, the 415-residue chain is Serine hydroxymethyltransferase (415 aa).

Residues Leu-121 and 125-127 (GHL) contribute to the (6S)-5,6,7,8-tetrahydrofolate site. Lys-230 bears the N6-(pyridoxal phosphate)lysine mark. 355-357 (SPF) contacts (6S)-5,6,7,8-tetrahydrofolate.

Belongs to the SHMT family. As to quaternary structure, homodimer. Pyridoxal 5'-phosphate is required as a cofactor.

The protein localises to the cytoplasm. The enzyme catalyses (6R)-5,10-methylene-5,6,7,8-tetrahydrofolate + glycine + H2O = (6S)-5,6,7,8-tetrahydrofolate + L-serine. It participates in one-carbon metabolism; tetrahydrofolate interconversion. Its pathway is amino-acid biosynthesis; glycine biosynthesis; glycine from L-serine: step 1/1. Its function is as follows. Catalyzes the reversible interconversion of serine and glycine with tetrahydrofolate (THF) serving as the one-carbon carrier. This reaction serves as the major source of one-carbon groups required for the biosynthesis of purines, thymidylate, methionine, and other important biomolecules. Also exhibits THF-independent aldolase activity toward beta-hydroxyamino acids, producing glycine and aldehydes, via a retro-aldol mechanism. The sequence is that of Serine hydroxymethyltransferase from Lactococcus lactis subsp. cremoris (strain SK11).